The following is a 391-amino-acid chain: Phosphoglycerate kinase (391 aa).

Substrate is bound by residues 21-23 (DLN), Arg-36, 59-62 (HLGR), Arg-113, and Arg-146. Residues Lys-197, Glu-319, and 345–348 (GGDT) each bind ATP.

It belongs to the phosphoglycerate kinase family. As to quaternary structure, monomer.

The protein localises to the cytoplasm. The enzyme catalyses (2R)-3-phosphoglycerate + ATP = (2R)-3-phospho-glyceroyl phosphate + ADP. It participates in carbohydrate degradation; glycolysis; pyruvate from D-glyceraldehyde 3-phosphate: step 2/5. This is Phosphoglycerate kinase from Xylella fastidiosa (strain 9a5c).